Here is a 212-residue protein sequence, read N- to C-terminus: LexA repressor (212 aa).

Positions 26–46 (VREIGEAVGLSSTSTVHGHID) form a DNA-binding region, H-T-H motif. Residues Ser128 and Lys171 each act as for autocatalytic cleavage activity in the active site.

Belongs to the peptidase S24 family. As to quaternary structure, homodimer.

The catalysed reaction is Hydrolysis of Ala-|-Gly bond in repressor LexA.. Its function is as follows. Represses a number of genes involved in the response to DNA damage (SOS response), including recA and lexA. In the presence of single-stranded DNA, RecA interacts with LexA causing an autocatalytic cleavage which disrupts the DNA-binding part of LexA, leading to derepression of the SOS regulon and eventually DNA repair. The sequence is that of LexA repressor from Oenococcus oeni (strain ATCC BAA-331 / PSU-1).